A 133-amino-acid polypeptide reads, in one-letter code: Large-conductance mechanosensitive channel (133 aa).

A run of 2 helical transmembrane segments spans residues 19 to 39 (IDLA…TSLV) and 79 to 99 (IQSV…VKLI).

Belongs to the MscL family. Homopentamer.

The protein localises to the cell membrane. Channel that opens in response to stretch forces in the membrane lipid bilayer. May participate in the regulation of osmotic pressure changes within the cell. The sequence is that of Large-conductance mechanosensitive channel from Clostridium tetani (strain Massachusetts / E88).